Consider the following 216-residue polypeptide: 3-isopropylmalate dehydratase small subunit (216 aa).

This sequence belongs to the LeuD family. LeuD type 1 subfamily. Heterodimer of LeuC and LeuD.

It catalyses the reaction (2R,3S)-3-isopropylmalate = (2S)-2-isopropylmalate. Its pathway is amino-acid biosynthesis; L-leucine biosynthesis; L-leucine from 3-methyl-2-oxobutanoate: step 2/4. Its function is as follows. Catalyzes the isomerization between 2-isopropylmalate and 3-isopropylmalate, via the formation of 2-isopropylmaleate. The chain is 3-isopropylmalate dehydratase small subunit from Polaromonas sp. (strain JS666 / ATCC BAA-500).